The chain runs to 118 residues: Large ribosomal subunit protein uL18 (118 aa).

It belongs to the universal ribosomal protein uL18 family. In terms of assembly, part of the 50S ribosomal subunit; part of the 5S rRNA/L5/L18/L25 subcomplex. Contacts the 5S and 23S rRNAs.

Functionally, this is one of the proteins that bind and probably mediate the attachment of the 5S RNA into the large ribosomal subunit, where it forms part of the central protuberance. The protein is Large ribosomal subunit protein uL18 of Helicobacter pylori (strain J99 / ATCC 700824) (Campylobacter pylori J99).